A 610-amino-acid polypeptide reads, in one-letter code: Glutamine--fructose-6-phosphate aminotransferase [isomerizing] (610 aa).

The active-site Nucleophile; for GATase activity is the cysteine 2. Residues 2–218 (CGIVGAVAQR…EGDVAEITRR (217 aa)) form the Glutamine amidotransferase type-2 domain. SIS domains lie at 286–426 (AAEI…QQGR) and 459–600 (LATD…VDQP). Catalysis depends on lysine 605, which acts as the For Fru-6P isomerization activity.

Homodimer.

Its subcellular location is the cytoplasm. The catalysed reaction is D-fructose 6-phosphate + L-glutamine = D-glucosamine 6-phosphate + L-glutamate. Catalyzes the first step in hexosamine metabolism, converting fructose-6P into glucosamine-6P using glutamine as a nitrogen source. The sequence is that of Glutamine--fructose-6-phosphate aminotransferase [isomerizing] from Vibrio vulnificus (strain YJ016).